Here is a 347-residue protein sequence, read N- to C-terminus: GMP reductase (347 aa).

NADP(+) is bound at residue 108-131 (ADFEKTKQILDLNPALNFVCIDVA). K(+)-binding residues include G181 and G183. The active-site Thioimidate intermediate is the C186. 216–239 (IVSDGGCTTPGDVAKAFGGGADFV) is an NADP(+) binding site.

Belongs to the IMPDH/GMPR family. GuaC type 1 subfamily. As to quaternary structure, homotetramer.

It catalyses the reaction IMP + NH4(+) + NADP(+) = GMP + NADPH + 2 H(+). Catalyzes the irreversible NADPH-dependent deamination of GMP to IMP. It functions in the conversion of nucleobase, nucleoside and nucleotide derivatives of G to A nucleotides, and in maintaining the intracellular balance of A and G nucleotides. The sequence is that of GMP reductase from Shigella dysenteriae serotype 1 (strain Sd197).